We begin with the raw amino-acid sequence, 447 residues long: Na(+)-translocating NADH-quinone reductase subunit A (447 aa).

This sequence belongs to the NqrA family. In terms of assembly, composed of six subunits; NqrA, NqrB, NqrC, NqrD, NqrE and NqrF.

It carries out the reaction a ubiquinone + n Na(+)(in) + NADH + H(+) = a ubiquinol + n Na(+)(out) + NAD(+). NQR complex catalyzes the reduction of ubiquinone-1 to ubiquinol by two successive reactions, coupled with the transport of Na(+) ions from the cytoplasm to the periplasm. NqrA to NqrE are probably involved in the second step, the conversion of ubisemiquinone to ubiquinol. The polypeptide is Na(+)-translocating NADH-quinone reductase subunit A (Saccharophagus degradans (strain 2-40 / ATCC 43961 / DSM 17024)).